A 721-amino-acid chain; its full sequence is Xylosyl- and glucuronyltransferase LARGE2 (721 aa).

Residues 1-8 (MLPRGRPR) are Cytoplasmic-facing. The chain crosses the membrane as a helical; Signal-anchor for type II membrane protein span at residues 9 to 29 (ALGAAALLLLLLLLGFLLFGG). Topologically, residues 30 to 721 (DLGCERREPG…LQQPQSPARG (692 aa)) are lumenal. The disordered stretch occupies residues 59–89 (DGRLRRAAALDGDPGAGPGDHNRSDCGPQPP). Asparagine 80 and asparagine 107 each carry an N-linked (GlcNAc...) asparagine glycan. The tract at residues 97–372 (LHVAIVCAGH…FLEYDGNLLR (276 aa)) is xylosyltransferase activity. Positions 201 and 203 each coordinate Mn(2+). A glycan (N-linked (GlcNAc...) asparagine) is linked at asparagine 231. The tract at residues 373–715 (RELFVCPSQP…LKYLPALQQP (343 aa)) is glucuronyltransferase activity. 2 residues coordinate Mn(2+): aspartate 521 and aspartate 523.

It in the C-terminal section; belongs to the glycosyltransferase 49 family. The protein in the N-terminal section; belongs to the glycosyltransferase 8 family. Interacts with B4GAT1. The cofactor is Mn(2+). Widely expressed. Expressed at high level in placenta, pancreas and kidney compared to LARGE. Not expressed in brain.

It localises to the golgi apparatus membrane. The catalysed reaction is 3-O-[beta-D-GlcA-(1-&gt;3)-beta-D-Xyl-(1-&gt;4)-Rib-ol-P-Rib-ol-P-3-beta-D-GalNAc-(1-&gt;3)-beta-D-GlcNAc-(1-&gt;4)-(O-6-P-alpha-D-Man)]-Thr-[protein] + UDP-alpha-D-xylose = 3-O-[alpha-D-Xyl-(1-&gt;3)-beta-D-GlcA-(1-&gt;4)-beta-D-Xyl-(1-&gt;4)-Rib-ol-P-Rib-ol-P-3-beta-D-GalNAc-(1-&gt;3)-beta-D-GlcNAc-(1-&gt;4)-(O-6-P-alpha-D-Man)]-Thr-[protein] + UDP + H(+). The enzyme catalyses 3-O-{(1-&gt;[3)-alpha-D-Xyl-(1-&gt;3)-beta-D-GlcA-(1-&gt;](n)-4)-beta-D-Xyl-(1-&gt;4)-Rib-ol-P-Rib-ol-P-3-beta-D-GalNAc-(1-&gt;3)-beta-D-GlcNAc-(1-&gt;4)-O-6-P-alpha-D-Man}-L-Thr-[protein] + UDP-alpha-D-glucuronate = 3-O-{beta-D-GlcA-(1-&gt;[3)-alpha-D-Xyl-(1-&gt;3)-beta-D-GlcA-(1-&gt;](n)-4)-beta-D-Xyl-(1-&gt;4)-Rib-ol-P-Rib-ol-P-3-beta-D-GalNAc-(1-&gt;3)-beta-D-GlcNAc-(1-&gt;4)-O-6-P-alpha-D-Man}-L-Thr-[protein] + UDP + H(+). It carries out the reaction 3-O-{beta-D-GlcA-(1-&gt;[3)-alpha-D-Xyl-(1-&gt;3)-beta-D-GlcA-(1-&gt;](n)-4)-beta-D-Xyl-(1-&gt;4)-Rib-ol-P-Rib-ol-P-3-beta-D-GalNAc-(1-&gt;3)-beta-D-GlcNAc-(1-&gt;4)-O-6-P-alpha-D-Man}-L-Thr-[protein] + UDP-alpha-D-xylose = 3-O-{(1-&gt;[3)-alpha-D-Xyl-(1-&gt;3)-beta-D-GlcA-(1-&gt;](n+1)-4)-beta-D-Xyl-(1-&gt;4)-Rib-ol-P-Rib-ol-P-3-beta-D-GalNAc-(1-&gt;3)-beta-D-GlcNAc-(1-&gt;4)-O-6-P-alpha-D-Man}-L-Thr-[protein] + UDP + H(+). It participates in protein modification; protein glycosylation. Its function is as follows. Bifunctional glycosyltransferase with both alpha-1,3-xylosyltransferase and beta-1,3-glucuronyltransferase activities involved in the maturation of alpha-dystroglycan (DAG1) by glycosylation leading to DAG1 binding to laminin G-like domain-containing extracellular proteins with high affinity and in a phosphorylated-O-mannosyl trisaccharide dependent manner. Elongates the glucuronyl-beta-1,4-xylose-beta disaccharide primer structure by adding repeating units [-3-Xylose-alpha-1,3-GlcA-beta-1-] to produce a heteropolysaccharide. Supports the maturation of DAG1 more effectively than LARGE1. In addition, can modify both heparan sulfate (HS)- and chondroitin/dermatan sulfate (CS/DS)-proteoglycans (PGs), namely GPC4, with a glycosaminoglycan (GAG)-like polysaccharide composed of xylose and glucuronic acid to confer laminin binding. In Homo sapiens (Human), this protein is Xylosyl- and glucuronyltransferase LARGE2.